The sequence spans 321 residues: Aspartate carbamoyltransferase catalytic subunit (321 aa).

The carbamoyl phosphate site is built by arginine 70 and threonine 71. Lysine 98 provides a ligand contact to L-aspartate. The carbamoyl phosphate site is built by arginine 120, histidine 148, and glutamine 151. Arginine 181 and arginine 235 together coordinate L-aspartate. Carbamoyl phosphate-binding residues include glycine 276 and proline 277.

It belongs to the aspartate/ornithine carbamoyltransferase superfamily. ATCase family. Heterododecamer (2C3:3R2) of six catalytic PyrB chains organized as two trimers (C3), and six regulatory PyrI chains organized as three dimers (R2).

The catalysed reaction is carbamoyl phosphate + L-aspartate = N-carbamoyl-L-aspartate + phosphate + H(+). Its pathway is pyrimidine metabolism; UMP biosynthesis via de novo pathway; (S)-dihydroorotate from bicarbonate: step 2/3. Catalyzes the condensation of carbamoyl phosphate and aspartate to form carbamoyl aspartate and inorganic phosphate, the committed step in the de novo pyrimidine nucleotide biosynthesis pathway. This chain is Aspartate carbamoyltransferase catalytic subunit, found in Gluconacetobacter diazotrophicus (strain ATCC 49037 / DSM 5601 / CCUG 37298 / CIP 103539 / LMG 7603 / PAl5).